The chain runs to 119 residues: Holo-[acyl-carrier-protein] synthase (119 aa).

The Mg(2+) site is built by Asp8 and Glu59.

The protein belongs to the P-Pant transferase superfamily. AcpS family. It depends on Mg(2+) as a cofactor.

It is found in the cytoplasm. The enzyme catalyses apo-[ACP] + CoA = holo-[ACP] + adenosine 3',5'-bisphosphate + H(+). Its function is as follows. Transfers the 4'-phosphopantetheine moiety from coenzyme A to a Ser of acyl-carrier-protein. This is Holo-[acyl-carrier-protein] synthase from Lactococcus lactis subsp. cremoris (strain SK11).